A 205-amino-acid polypeptide reads, in one-letter code: Holliday junction branch migration complex subunit RuvA (205 aa).

A domain I region spans residues 1-62 (MFEYVTGYVE…EDIMALYGFK (62 aa)). The domain II stretch occupies residues 63-141 (TREERLLFTK…DVVPDAFVDL (79 aa)). Residues 142–152 (FSDTERFDEKK) form a flexible linker region. The segment at 153–205 (GTSAELDEALEALRALGYAEREVSRVVPELLKESLTTDQYIKKALSLLLNGKR) is domain III.

The protein belongs to the RuvA family. As to quaternary structure, homotetramer. Forms an RuvA(8)-RuvB(12)-Holliday junction (HJ) complex. HJ DNA is sandwiched between 2 RuvA tetramers; dsDNA enters through RuvA and exits via RuvB. An RuvB hexamer assembles on each DNA strand where it exits the tetramer. Each RuvB hexamer is contacted by two RuvA subunits (via domain III) on 2 adjacent RuvB subunits; this complex drives branch migration. In the full resolvosome a probable DNA-RuvA(4)-RuvB(12)-RuvC(2) complex forms which resolves the HJ.

The protein resides in the cytoplasm. In terms of biological role, the RuvA-RuvB-RuvC complex processes Holliday junction (HJ) DNA during genetic recombination and DNA repair, while the RuvA-RuvB complex plays an important role in the rescue of blocked DNA replication forks via replication fork reversal (RFR). RuvA specifically binds to HJ cruciform DNA, conferring on it an open structure. The RuvB hexamer acts as an ATP-dependent pump, pulling dsDNA into and through the RuvAB complex. HJ branch migration allows RuvC to scan DNA until it finds its consensus sequence, where it cleaves and resolves the cruciform DNA. The polypeptide is Holliday junction branch migration complex subunit RuvA (Bacillus cereus (strain G9842)).